The sequence spans 1183 residues: Phospholipid-transporting ATPase FetA (1183 aa).

3 helical membrane passes run 96-116, 299-319, and 348-368; these read ISSLAWYTTVIPLIVVLSITG, VLVVWIFMFLGGMCFLLSIGH, and ALIFWSYFIVLNTMVPISLYV. Catalysis depends on Asp416, which acts as the 4-aspartylphosphate intermediate. ATP is bound by residues Asp416, Lys417, Thr418, Glu519, Phe560, Lys583, Arg617, Thr697, Gly698, Asp699, Arg812, and Lys818. Asp416 provides a ligand contact to Mg(2+). Position 418 (Thr418) interacts with Mg(2+). Asp838 contacts Mg(2+). ATP contacts are provided by Asn841 and Asp842. Asp842 is a Mg(2+) binding site. The next 6 helical transmembrane spans lie at 904-924, 927-947, 981-1001, 1014-1034, 1049-1069, and 1090-1110; these read FAFTLVHFWYAFFNGFSAQTV, IWFITFYNLIYTSLPVLGLSL, CLLHGIYNSFVLFFVPMGTVF, FQSFSLLVQTTLIGVMTMQIA, WGSLGLYFCILILLCSDGLCL, and IWLCLILSTILCMIPLIGYNF.

Belongs to the cation transport ATPase (P-type) (TC 3.A.3) family. Type IV subfamily. Requires Mg(2+) as cofactor. Highly expressed in testis.

It is found in the cytoplasmic vesicle. It localises to the secretory vesicle. The protein resides in the acrosome membrane. It catalyses the reaction ATP + H2O + phospholipidSide 1 = ADP + phosphate + phospholipidSide 2.. In terms of biological role, P4-ATPase flippase which catalyzes the hydrolysis of ATP coupled to the transport of aminophospholipids from the outer to the inner leaflet of various membranes and ensures the maintenance of asymmetric distribution of phospholipids. Phospholipid translocation also seems to be implicated in vesicle formation and in uptake of lipid signaling molecules. May play a role in phospholid transport across membranes and in acrosome formation. This Mus musculus (Mouse) protein is Phospholipid-transporting ATPase FetA (Atp8b5).